The sequence spans 89 residues: Small ribosomal subunit protein uS17 (89 aa).

This sequence belongs to the universal ribosomal protein uS17 family. Part of the 30S ribosomal subunit.

One of the primary rRNA binding proteins, it binds specifically to the 5'-end of 16S ribosomal RNA. The protein is Small ribosomal subunit protein uS17 of Xylella fastidiosa (strain 9a5c).